The chain runs to 1235 residues: ATP-dependent helicase/nuclease subunit A (1235 aa).

In terms of domain architecture, UvrD-like helicase ATP-binding spans 12–482 (SLWTDDQWKA…IDLSQNFRSR (471 aa)). 33–40 (AAAGSGKT) is an ATP binding site. Positions 509-800 (AAELTLGAKS…RMMTIHASKG (292 aa)) constitute a UvrD-like helicase C-terminal domain.

It belongs to the helicase family. AddA subfamily. As to quaternary structure, heterodimer of AddA and AddB/RexB. Requires Mg(2+) as cofactor.

The enzyme catalyses Couples ATP hydrolysis with the unwinding of duplex DNA by translocating in the 3'-5' direction.. It carries out the reaction ATP + H2O = ADP + phosphate + H(+). Functionally, the heterodimer acts as both an ATP-dependent DNA helicase and an ATP-dependent, dual-direction single-stranded exonuclease. Recognizes the chi site generating a DNA molecule suitable for the initiation of homologous recombination. The AddA nuclease domain is required for chi fragment generation; this subunit has the helicase and 3' -&gt; 5' nuclease activities. The sequence is that of ATP-dependent helicase/nuclease subunit A from Listeria monocytogenes serotype 4a (strain HCC23).